An 88-amino-acid polypeptide reads, in one-letter code: MATSDVKPKSISRAKKWSEEIENLYRFQQAGYRDEIEYKQVKQVAMVDRWPETGYVKKLQRRDNTFFYYNKERECEDKEVHKVKVYVY.

The protein belongs to the MEIG1 family. In terms of assembly, interacts with PACRG. Interacts with MORN3. In terms of tissue distribution, expressed in the testes (at protein level). Expressed in the ovary. Several isoforms have been identified differing in their 5'-untranslated exons. These isoforms show different tissue expression. Some are expressed in various tissues, including lung, liver, brain, testis, oviduct and oocytes. Some are testis-specific.

Essential for spermiogenesis. The chain is Meiosis-expressed gene 1 protein from Mus musculus (Mouse).